Reading from the N-terminus, the 321-residue chain is MIDFRPFYRQIATSNLSAWLETLPLQLKNWEKNTHGEYAKWAKIVDFLPELTADHLDLKNAVKSDRTLPLSEGERQRIIHHLQQLMPWRKGPYHLYGIHVDCEWRSDFKWQRVLPHLAPLQDRTVLDVGCGSGYHMWRMVGEGAKTVVGIDPTELFLCQFEAVRKLLNNDRRANLIPLGIEEMQPLGVFDTVFSMGVLYHRKSPLDHLTQLKNQLRKGGELVLETLVIDGDENTVLVPADRYAKMKNVYFIPSVACLINWLGKSGFTNIRCVDEAVTTLEEQRKTDWLNNESLIDFLDPQDHSKTIEGYPAPKRAVIIANK.

Carboxy-S-adenosyl-L-methionine contacts are provided by residues lysine 90, tryptophan 104, lysine 109, glycine 129, 151-153, 180-181, methionine 195, tyrosine 199, and arginine 314; these read DPT and IE.

Belongs to the class I-like SAM-binding methyltransferase superfamily. CmoB family. In terms of assembly, homotetramer.

The enzyme catalyses carboxy-S-adenosyl-L-methionine + 5-hydroxyuridine(34) in tRNA = 5-carboxymethoxyuridine(34) in tRNA + S-adenosyl-L-homocysteine + H(+). Functionally, catalyzes carboxymethyl transfer from carboxy-S-adenosyl-L-methionine (Cx-SAM) to 5-hydroxyuridine (ho5U) to form 5-carboxymethoxyuridine (cmo5U) at position 34 in tRNAs. In Actinobacillus succinogenes (strain ATCC 55618 / DSM 22257 / CCUG 43843 / 130Z), this protein is tRNA U34 carboxymethyltransferase.